The sequence spans 86 residues: Weak neurotoxin 8 (86 aa).

Positions 1-21 (MKTLLLTLVVVTIVCLDLGYT) are cleaved as a signal peptide. 5 cysteine pairs are disulfide-bonded: cysteine 24–cysteine 45, cysteine 27–cysteine 32, cysteine 38–cysteine 63, cysteine 67–cysteine 78, and cysteine 79–cysteine 84.

It belongs to the three-finger toxin family. Ancestral subfamily. Orphan group II sub-subfamily. Expressed by the venom gland.

Its subcellular location is the secreted. Binds with low affinity to muscular (alpha-1-beta-1-delta-epsilon/CHRNA1-CHRNB1-CHRND-CHRNE) and very low affinity to neuronal (alpha-7/CHRNA7) nicotinic acetylcholine receptor (nAChR). The polypeptide is Weak neurotoxin 8 (Naja sputatrix (Malayan spitting cobra)).